Consider the following 271-residue polypeptide: Formamidopyrimidine-DNA glycosylase (271 aa).

The active-site Schiff-base intermediate with DNA is the Pro2. Glu3 (proton donor) is an active-site residue. Catalysis depends on Lys58, which acts as the Proton donor; for beta-elimination activity. DNA-binding residues include His92, Arg111, and Lys152. The FPG-type zinc finger occupies 237–271; sequence YVYGKVQKPCKICNNIITLIRQNGRSTYFCNACQN. Arg261 serves as the catalytic Proton donor; for delta-elimination activity.

It belongs to the FPG family. In terms of assembly, monomer. The cofactor is Zn(2+).

It catalyses the reaction Hydrolysis of DNA containing ring-opened 7-methylguanine residues, releasing 2,6-diamino-4-hydroxy-5-(N-methyl)formamidopyrimidine.. It carries out the reaction 2'-deoxyribonucleotide-(2'-deoxyribose 5'-phosphate)-2'-deoxyribonucleotide-DNA = a 3'-end 2'-deoxyribonucleotide-(2,3-dehydro-2,3-deoxyribose 5'-phosphate)-DNA + a 5'-end 5'-phospho-2'-deoxyribonucleoside-DNA + H(+). Its function is as follows. Involved in base excision repair of DNA damaged by oxidation or by mutagenic agents. Acts as a DNA glycosylase that recognizes and removes damaged bases. Has a preference for oxidized purines, such as 7,8-dihydro-8-oxoguanine (8-oxoG). Has AP (apurinic/apyrimidinic) lyase activity and introduces nicks in the DNA strand. Cleaves the DNA backbone by beta-delta elimination to generate a single-strand break at the site of the removed base with both 3'- and 5'-phosphates. This chain is Formamidopyrimidine-DNA glycosylase, found in Wolbachia sp. subsp. Drosophila simulans (strain wRi).